Reading from the N-terminus, the 314-residue chain is MERLIFYITLITFIFLLFLYPIFIKWLKKRQFGQYIRKEGPDLHNYKQGTPTMGGILFILAIFFLSLLTYFIQKEDLFLIIGVASLLFGFIGFLDDYLSIKKKDSTGLTAIQKLLLQFLFSIVIVYLISIFNNHSTLKIPFTTKSLDLKFFYPLWGIIYLTGMSNATNLTDGIDGLSGGIYVISALFTALIAGINFNHIPLLILPVIAYLFYNIKPAKIFMGDTGSLALGGILGSLALYYSVELFTILTCFIFISEMFSVIIQVGSFKVRKKRVFLMAPIHHHFELKKWSEERIVLIFWTINILTGIVALGGVL.

Transmembrane regions (helical) follow at residues 4 to 24, 52 to 72, 77 to 97, 111 to 131, 146 to 166, 169 to 189, 191 to 211, 219 to 239, 242 to 262, and 294 to 314; these read LIFY…PIFI, TMGG…TYFI, LFLI…LDDY, IQKL…ISIF, LDLK…MSNA, LTDG…LFTA, IAGI…AYLF, IFMG…LALY, VELF…SVII, and IVLI…GGVL.

Belongs to the glycosyltransferase 4 family. MraY subfamily. The cofactor is Mg(2+).

Its subcellular location is the cell inner membrane. The enzyme catalyses UDP-N-acetyl-alpha-D-muramoyl-L-alanyl-gamma-D-glutamyl-meso-2,6-diaminopimeloyl-D-alanyl-D-alanine + di-trans,octa-cis-undecaprenyl phosphate = di-trans,octa-cis-undecaprenyl diphospho-N-acetyl-alpha-D-muramoyl-L-alanyl-D-glutamyl-meso-2,6-diaminopimeloyl-D-alanyl-D-alanine + UMP. It participates in cell wall biogenesis; peptidoglycan biosynthesis. Catalyzes the initial step of the lipid cycle reactions in the biosynthesis of the cell wall peptidoglycan: transfers peptidoglycan precursor phospho-MurNAc-pentapeptide from UDP-MurNAc-pentapeptide onto the lipid carrier undecaprenyl phosphate, yielding undecaprenyl-pyrophosphoryl-MurNAc-pentapeptide, known as lipid I. The protein is Phospho-N-acetylmuramoyl-pentapeptide-transferase of Petrotoga mobilis (strain DSM 10674 / SJ95).